The following is a 165-amino-acid chain: Phosphopantetheine adenylyltransferase (165 aa).

T11 lines the substrate pocket. ATP-binding positions include 11-12 and H19; that span reads TF. Substrate contacts are provided by K43, V75, and R89. ATP contacts are provided by residues 90–92, E100, and 125–131; these read GLR and YQFISST.

This sequence belongs to the bacterial CoaD family. In terms of assembly, homohexamer. Mg(2+) is required as a cofactor.

It localises to the cytoplasm. It catalyses the reaction (R)-4'-phosphopantetheine + ATP + H(+) = 3'-dephospho-CoA + diphosphate. Its pathway is cofactor biosynthesis; coenzyme A biosynthesis; CoA from (R)-pantothenate: step 4/5. Its function is as follows. Reversibly transfers an adenylyl group from ATP to 4'-phosphopantetheine, yielding dephospho-CoA (dPCoA) and pyrophosphate. The protein is Phosphopantetheine adenylyltransferase of Acidovorax ebreus (strain TPSY) (Diaphorobacter sp. (strain TPSY)).